Consider the following 368-residue polypeptide: Tubby-like F-box protein 2 (368 aa).

A compositionally biased stretch (low complexity) spans 1 to 17 (MVPWRRSSSSSSAPSSR). The tract at residues 1–44 (MVPWRRSSSSSSAPSSRPARRPARTNARVSPDVSSELSPLAGEE) is disordered. The 56-residue stretch at 49–104 (ERWSALVPDLLADILRCVEAGSERWPPRRDVVACASVCRRWRDVAVAVVQPPLESG) folds into the F-box domain.

The protein belongs to the TUB family. Expressed in stems, leaves, flowers and seeds.

This chain is Tubby-like F-box protein 2 (TULP2), found in Oryza sativa subsp. japonica (Rice).